The chain runs to 459 residues: tRNA modification GTPase MnmE (459 aa).

The (6S)-5-formyl-5,6,7,8-tetrahydrofolate site is built by arginine 22, glutamate 85, and arginine 124. Residues 221–380 (GLSTVIVGKP…LEIQIRDLFF (160 aa)) form the TrmE-type G domain. Asparagine 231 is a K(+) binding site. Residues 231 to 236 (NVGKSS), 250 to 256 (TEVAGTT), and 275 to 278 (DTAG) each bind GTP. Residue serine 235 participates in Mg(2+) binding. K(+)-binding residues include threonine 250, valine 252, and threonine 255. Threonine 256 lines the Mg(2+) pocket. Lysine 459 serves as a coordination point for (6S)-5-formyl-5,6,7,8-tetrahydrofolate.

This sequence belongs to the TRAFAC class TrmE-Era-EngA-EngB-Septin-like GTPase superfamily. TrmE GTPase family. Homodimer. Heterotetramer of two MnmE and two MnmG subunits. The cofactor is K(+).

The protein localises to the cytoplasm. Functionally, exhibits a very high intrinsic GTPase hydrolysis rate. Involved in the addition of a carboxymethylaminomethyl (cmnm) group at the wobble position (U34) of certain tRNAs, forming tRNA-cmnm(5)s(2)U34. This is tRNA modification GTPase MnmE from Staphylococcus aureus (strain MSSA476).